Reading from the N-terminus, the 207-residue chain is CASP-like protein F16 (207 aa).

A disordered region spans residues 1 to 30 (MEKSEKGNGVAPATRSPMALMGSSRNENQE). Topologically, residues 1–37 (MEKSEKGNGVAPATRSPMALMGSSRNENQEVNTSMRT) are cytoplasmic. A helical membrane pass occupies residues 38 to 58 (AETMLRLVPMALGVAALVVML). At 59 to 79 (KNSQSNDFGSVSYSDLGAFRY) the chain is on the extracellular side. A helical transmembrane segment spans residues 80–100 (LVHANGICAGYSLLSAIIAAV). Residues 101-108 (PSPSTMPR) are Cytoplasmic-facing. A helical transmembrane segment spans residues 109–129 (AWTFFLLDQILTYVILGAAAV). The Extracellular portion of the chain corresponds to 130–159 (STEVLYLANKGDSAITWSAACGTFAGFCHK). The helical transmembrane segment at 160 to 180 (ATIAVVITFVAVICYAVLSLV) threads the bilayer. The Cytoplasmic portion of the chain corresponds to 181 to 207 (SSYRLFTKFDAPVNYPSKTIEATVFHG).

Belongs to the Casparian strip membrane proteins (CASP) family. Homodimer and heterodimers.

The protein resides in the cell membrane. This chain is CASP-like protein F16 (F16), found in Gossypium hirsutum (Upland cotton).